The primary structure comprises 78 residues: Large ribosomal subunit protein bL28B (78 aa).

Positions 1 to 29 (MSAHCQVTGRKPGFGNTVSHSHRRSRRRW) are disordered. The span at 20–29 (HSHRRSRRRW) shows a compositional bias: basic residues.

This sequence belongs to the bacterial ribosomal protein bL28 family.

In Mycobacterium bovis (strain ATCC BAA-935 / AF2122/97), this protein is Large ribosomal subunit protein bL28B (rpmB2).